A 116-amino-acid chain; its full sequence is MAALWLQSFSLLVLLVVSWPGSQAVAPAQHLCGSHLVDALYLVCGDRGFFYNPKRDVDQLLGFLPPKSGGAAAAGADNEVAEFAFKDQMEMMVKRGIVEQCCHRPCNIFDLQNYCN.

The first 24 residues, 1–24, serve as a signal peptide directing secretion; the sequence is MAALWLQSFSLLVLLVVSWPGSQA. Cystine bridges form between Cys-32–Cys-102, Cys-44–Cys-115, and Cys-101–Cys-106. Positions 56 to 93 are cleaved as a propeptide — c peptide; the sequence is DVDQLLGFLPPKSGGAAAAGADNEVAEFAFKDQMEMMV.

It belongs to the insulin family. In terms of assembly, heterodimer of a B chain and an A chain linked by two disulfide bonds.

Its subcellular location is the secreted. In terms of biological role, insulin decreases blood glucose concentration. It increases cell permeability to monosaccharides, amino acids and fatty acids. It accelerates glycolysis, the pentose phosphate cycle, and glycogen synthesis in liver. The sequence is that of Insulin (ins) from Lophius americanus (American angler).